The chain runs to 463 residues: DDB1- and CUL4-associated factor 12-like protein 1 (463 aa).

Residues 1 to 35 (MAQQQTGSRKRKAPAVEADAESSPSQGLAAADGEG) form a disordered region. WD repeat units lie at residues 87–137 (LTER…PLLR), 138–184 (DSEA…SLDP), 185–252 (LCLG…DVEA), 253–297 (IPRA…ALSR), 298–341 (LLSI…QQNI), and 342–376 (RPLCSREGGTGVRSLSFYRHIITVGTGQGSLLFYD).

This sequence belongs to the WD repeat DCAF12 family.

This Homo sapiens (Human) protein is DDB1- and CUL4-associated factor 12-like protein 1 (DCAF12L1).